The sequence spans 202 residues: Small ribosomal subunit protein uS4c (202 aa).

Residues 90–153 (MRLDNVIFRL…KSETIISKNI (64 aa)) enclose the S4 RNA-binding domain.

Belongs to the universal ribosomal protein uS4 family. In terms of assembly, part of the 30S ribosomal subunit. Contacts protein S5. The interaction surface between S4 and S5 is involved in control of translational fidelity.

The protein localises to the plastid. It localises to the chloroplast. One of the primary rRNA binding proteins, it binds directly to 16S rRNA where it nucleates assembly of the body of the 30S subunit. In terms of biological role, with S5 and S12 plays an important role in translational accuracy. The chain is Small ribosomal subunit protein uS4c (rps4) from Arbusculohypopterygium arbuscula (Moss).